An 856-amino-acid polypeptide reads, in one-letter code: DNA mismatch repair protein MutS (856 aa).

Residue 605-612 (GPNMSGKS) coordinates ATP.

It belongs to the DNA mismatch repair MutS family.

In terms of biological role, this protein is involved in the repair of mismatches in DNA. It is possible that it carries out the mismatch recognition step. This protein has a weak ATPase activity. The chain is DNA mismatch repair protein MutS from Lysinibacillus sphaericus (strain C3-41).